Here is a 510-residue protein sequence, read N- to C-terminus: 2,3-bisphosphoglycerate-independent phosphoglycerate mutase (510 aa).

Mn(2+) is bound by residues aspartate 12 and serine 62. The active-site Phosphoserine intermediate is serine 62. Substrate contacts are provided by residues histidine 123, 152–153, arginine 184, arginine 190, 257–260, and lysine 331; these read RD and RADR. The Mn(2+) site is built by aspartate 399, histidine 403, aspartate 440, histidine 441, and histidine 458.

It belongs to the BPG-independent phosphoglycerate mutase family. In terms of assembly, monomer. Mn(2+) serves as cofactor.

The catalysed reaction is (2R)-2-phosphoglycerate = (2R)-3-phosphoglycerate. It functions in the pathway carbohydrate degradation; glycolysis; pyruvate from D-glyceraldehyde 3-phosphate: step 3/5. Its function is as follows. Catalyzes the interconversion of 2-phosphoglycerate and 3-phosphoglycerate. The protein is 2,3-bisphosphoglycerate-independent phosphoglycerate mutase of Lawsonia intracellularis (strain PHE/MN1-00).